Consider the following 363-residue polypeptide: Replication factor C subunit 4 (363 aa).

An N-acetylmethionine modification is found at Met-1. The interval 1–36 is disordered; sequence MQAFLKGTSISTKPPLTKDRGVAASAGSSGENKKAK. Residues Lys-6 and Lys-13 each carry the N6-acetyllysine modification. Position 78–85 (78–85) interacts with ATP; the sequence is GPPGTGKT.

This sequence belongs to the activator 1 small subunits family. In terms of assembly, subunit of the RFC complex, an heteropentameric complex consisting of a large subunit RFC1 and four small subunits RFC2, RFC3, RFC4 and RFC5; the RFC complex interacts with PCNA. Forms an heterotetrameric complex with RFC2, RFC3 and RFC5; this complex has ATPase activity but is not stimulated by PCNA. The heterotetramer of subunits RFC2, RFC3, RFC4 and RFC5 interacts with RAD17. Interacts with ATAD5. Interacts with CTF18. Interacts with CNTD1; this interaction facilitates crossover formation.

The protein localises to the nucleus. Subunit of the replication factor C (RFC) complex which acts during elongation of primed DNA templates by DNA polymerases delta and epsilon, and is necessary for ATP-dependent loading of proliferating cell nuclear antigen (PCNA) onto primed DNA. The RFC4 subunit probably functions as a scaffold on which the other complex components can assemble. In Homo sapiens (Human), this protein is Replication factor C subunit 4 (RFC4).